The sequence spans 249 residues: Sugar fermentation stimulation protein homolog (249 aa).

This sequence belongs to the SfsA family.

The polypeptide is Sugar fermentation stimulation protein homolog (Synechococcus sp. (strain CC9902)).